Consider the following 361-residue polypeptide: Histidinol-phosphate aminotransferase (361 aa).

Lysine 223 carries the N6-(pyridoxal phosphate)lysine modification.

The protein belongs to the class-II pyridoxal-phosphate-dependent aminotransferase family. Histidinol-phosphate aminotransferase subfamily. Homodimer. The cofactor is pyridoxal 5'-phosphate.

The enzyme catalyses L-histidinol phosphate + 2-oxoglutarate = 3-(imidazol-4-yl)-2-oxopropyl phosphate + L-glutamate. It functions in the pathway amino-acid biosynthesis; L-histidine biosynthesis; L-histidine from 5-phospho-alpha-D-ribose 1-diphosphate: step 7/9. This chain is Histidinol-phosphate aminotransferase, found in Deinococcus radiodurans (strain ATCC 13939 / DSM 20539 / JCM 16871 / CCUG 27074 / LMG 4051 / NBRC 15346 / NCIMB 9279 / VKM B-1422 / R1).